The following is a 66-amino-acid chain: uncharacterized protein (66 aa).

To M.jannaschii MJ0582.

This is an uncharacterized protein from Methanocaldococcus jannaschii (strain ATCC 43067 / DSM 2661 / JAL-1 / JCM 10045 / NBRC 100440) (Methanococcus jannaschii).